Reading from the N-terminus, the 138-residue chain is Large ribosomal subunit protein uL16 (138 aa).

This sequence belongs to the universal ribosomal protein uL16 family. As to quaternary structure, part of the 50S ribosomal subunit.

Binds 23S rRNA and is also seen to make contacts with the A and possibly P site tRNAs. The chain is Large ribosomal subunit protein uL16 from Ureaplasma urealyticum serovar 10 (strain ATCC 33699 / Western).